The primary structure comprises 64 residues: Alpha-mammal toxin Lqh2 (64 aa).

Positions 2 to 64 constitute an LCN-type CS-alpha/beta domain; the sequence is KDGYIVDDVN…VRTKGPGRCR (63 aa). 4 cysteine pairs are disulfide-bonded: cysteine 12–cysteine 63, cysteine 16–cysteine 36, cysteine 22–cysteine 46, and cysteine 26–cysteine 48. Arginine 64 carries the arginine amide modification.

The protein belongs to the long (4 C-C) scorpion toxin superfamily. Sodium channel inhibitor family. Alpha subfamily. As to expression, expressed by the venom gland.

The protein localises to the secreted. Functionally, alpha toxins bind voltage-independently at site-3 of sodium channels (Nav) and inhibit the inactivation of the activated channels, thereby blocking neuronal transmission. The dissociation is voltage-dependent. Is active on mammals and competes for alpha-toxins binding on both mammalian and cockroach sodium channels. This chain is Alpha-mammal toxin Lqh2, found in Leiurus hebraeus (Hebrew deathstalker scorpion).